Consider the following 587-residue polypeptide: 5-aminolevulinate synthase, erythroid-specific, mitochondrial (587 aa).

The N-terminal 49 residues, 1-49 (MVTAAMLLQCCPVPARGPTSLLGKVVKTHQFLFGIGRCPILATQGPNCS), are a transit peptide targeting the mitochondrion. R163 is a succinyl-CoA binding site. Pyridoxal 5'-phosphate contacts are provided by C258 and F259. Residues S280 and K299 each coordinate succinyl-CoA. Pyridoxal 5'-phosphate is bound by residues S332, H360, and T388. K391 is a catalytic residue. The residue at position 391 (K391) is an N6-(pyridoxal phosphate)lysine. 2 residues coordinate pyridoxal 5'-phosphate: T420 and T421. T508 provides a ligand contact to succinyl-CoA.

Belongs to the class-II pyridoxal-phosphate-dependent aminotransferase family. In terms of assembly, homodimer. Interacts with SUCLA2. Requires pyridoxal 5'-phosphate as cofactor.

Its subcellular location is the mitochondrion inner membrane. The enzyme catalyses succinyl-CoA + glycine + H(+) = 5-aminolevulinate + CO2 + CoA. It participates in porphyrin-containing compound metabolism; protoporphyrin-IX biosynthesis; 5-aminolevulinate from glycine: step 1/1. Functionally, catalyzes the pyridoxal 5'-phosphate (PLP)-dependent condensation of succinyl-CoA and glycine to form aminolevulinic acid (ALA), with CoA and CO2 as by-products. Contributes significantly to heme formation during erythropoiesis. This chain is 5-aminolevulinate synthase, erythroid-specific, mitochondrial (ALAS2), found in Pongo abelii (Sumatran orangutan).